The chain runs to 339 residues: uncharacterized protein (339 aa).

The span at 1-12 shows a compositional bias: polar residues; sequence MDIDLNNQTDNN. The disordered stretch occupies residues 1–30; it reads MDIDLNNQTDNNELIVEDTENPKNPNSTNI.

This is an uncharacterized protein from Acanthamoeba polyphaga (Amoeba).